The sequence spans 127 residues: Holo-[acyl-carrier-protein] synthase (127 aa).

Mg(2+)-binding residues include Asp-9 and Glu-58.

The protein belongs to the P-Pant transferase superfamily. AcpS family. Requires Mg(2+) as cofactor.

It localises to the cytoplasm. It carries out the reaction apo-[ACP] + CoA = holo-[ACP] + adenosine 3',5'-bisphosphate + H(+). Transfers the 4'-phosphopantetheine moiety from coenzyme A to a Ser of acyl-carrier-protein. The protein is Holo-[acyl-carrier-protein] synthase of Shewanella baltica (strain OS195).